We begin with the raw amino-acid sequence, 66 residues long: LKCVNLQANGVKMTQECAKEDTKCLTLRSLKKTLKFCASDRICKTMKIASLPGEQITCCEGNMCNA.

Cystine bridges form between Cys-3–Cys-24, Cys-17–Cys-37, Cys-43–Cys-58, and Cys-59–Cys-64.

Expressed by the skin dorsal glands.

It is found in the secreted. In terms of biological role, lacks alpha-neurotoxic activity, has apparently no antibacterial activity, nor anti-coagulant potency. This Xenopus laevis (African clawed frog) protein is Xenoxin-3.